The chain runs to 278 residues: Purine nucleoside phosphorylase YlmD (278 aa).

Zn(2+)-binding residues include His87, Cys132, and His149.

This sequence belongs to the purine nucleoside phosphorylase YfiH/LACC1 family. Homodimer. The cofactor is Cu(2+). It depends on Zn(2+) as a cofactor.

It catalyses the reaction adenosine + phosphate = alpha-D-ribose 1-phosphate + adenine. It carries out the reaction S-methyl-5'-thioadenosine + phosphate = 5-(methylsulfanyl)-alpha-D-ribose 1-phosphate + adenine. The enzyme catalyses inosine + phosphate = alpha-D-ribose 1-phosphate + hypoxanthine. The catalysed reaction is adenosine + H2O + H(+) = inosine + NH4(+). In terms of biological role, purine nucleoside enzyme that catalyzes the phosphorolysis of adenosine and inosine nucleosides, yielding D-ribose 1-phosphate and the respective free bases, adenine and hypoxanthine. Also catalyzes the phosphorolysis of S-methyl-5'-thioadenosine into adenine and S-methyl-5-thio-alpha-D-ribose 1-phosphate. Also has adenosine deaminase activity. This is Purine nucleoside phosphorylase YlmD (ylmD) from Bacillus subtilis (strain 168).